The primary structure comprises 598 residues: Elongation factor 4 (598 aa).

Residues 4-186 (KHIRNFSIIA…VIVRQIPPPE (183 aa)) form the tr-type G domain. Residues 16 to 21 (DHGKST) and 133 to 136 (NKID) each bind GTP.

The protein belongs to the TRAFAC class translation factor GTPase superfamily. Classic translation factor GTPase family. LepA subfamily.

The protein localises to the cell inner membrane. It carries out the reaction GTP + H2O = GDP + phosphate + H(+). Its function is as follows. Required for accurate and efficient protein synthesis under certain stress conditions. May act as a fidelity factor of the translation reaction, by catalyzing a one-codon backward translocation of tRNAs on improperly translocated ribosomes. Back-translocation proceeds from a post-translocation (POST) complex to a pre-translocation (PRE) complex, thus giving elongation factor G a second chance to translocate the tRNAs correctly. Binds to ribosomes in a GTP-dependent manner. This Pseudoalteromonas atlantica (strain T6c / ATCC BAA-1087) protein is Elongation factor 4.